Reading from the N-terminus, the 474-residue chain is Synaptotagmin-15B (474 aa).

2 disordered regions span residues 1–62 (MGVV…AASG) and 75–128 (PRAA…PPAV). Low complexity predominate over residues 75 to 88 (PRAAAGHQQHHGPP). C2 domains are found at residues 200–317 (CLGR…RRVI) and 331–452 (EFGD…EHWD).

Belongs to the synaptotagmin family.

This is Synaptotagmin-15B from Homo sapiens (Human).